The primary structure comprises 276 residues: Sulfur carrier protein FdhD (276 aa).

Cys-118 acts as the Cysteine persulfide intermediate in catalysis.

The protein belongs to the FdhD family.

It localises to the cytoplasm. In terms of biological role, required for formate dehydrogenase (FDH) activity. Acts as a sulfur carrier protein that transfers sulfur from IscS to the molybdenum cofactor prior to its insertion into FDH. The polypeptide is Sulfur carrier protein FdhD (Mycobacterium bovis (strain ATCC BAA-935 / AF2122/97)).